We begin with the raw amino-acid sequence, 394 residues long: Flavohemoprotein (394 aa).

The Globin domain maps to 1-136 (MLSENTINIV…LANVFIQREE (136 aa)). Histidine 85 is a heme b binding site. Catalysis depends on charge relay system residues tyrosine 95 and glutamate 135. The segment at 147–394 (GGWRGLREFE…YECFGPHKVV (248 aa)) is reductase. The 106-residue stretch at 150 to 255 (RGLREFELVE…AAPAGDFFLD (106 aa)) folds into the FAD-binding FR-type domain. Residues tyrosine 188 and 204–207 (RQYS) each bind FAD. 268–273 (GVGLTP) is an NADP(+) binding site. 387 to 390 (CFGP) lines the FAD pocket.

It belongs to the globin family. Two-domain flavohemoproteins subfamily. The protein in the C-terminal section; belongs to the flavoprotein pyridine nucleotide cytochrome reductase family. Heme b is required as a cofactor. The cofactor is FAD.

It catalyses the reaction 2 nitric oxide + NADPH + 2 O2 = 2 nitrate + NADP(+) + H(+). The enzyme catalyses 2 nitric oxide + NADH + 2 O2 = 2 nitrate + NAD(+) + H(+). Functionally, is involved in NO detoxification in an aerobic process, termed nitric oxide dioxygenase (NOD) reaction that utilizes O(2) and NAD(P)H to convert NO to nitrate, which protects the bacterium from various noxious nitrogen compounds. Therefore, plays a central role in the inducible response to nitrosative stress. This Vibrio vulnificus (strain YJ016) protein is Flavohemoprotein.